The primary structure comprises 424 residues: Gamma-glutamyl phosphate reductase (424 aa).

This sequence belongs to the gamma-glutamyl phosphate reductase family.

The protein localises to the cytoplasm. The enzyme catalyses L-glutamate 5-semialdehyde + phosphate + NADP(+) = L-glutamyl 5-phosphate + NADPH + H(+). The protein operates within amino-acid biosynthesis; L-proline biosynthesis; L-glutamate 5-semialdehyde from L-glutamate: step 2/2. Its function is as follows. Catalyzes the NADPH-dependent reduction of L-glutamate 5-phosphate into L-glutamate 5-semialdehyde and phosphate. The product spontaneously undergoes cyclization to form 1-pyrroline-5-carboxylate. The sequence is that of Gamma-glutamyl phosphate reductase from Halorhodospira halophila (strain DSM 244 / SL1) (Ectothiorhodospira halophila (strain DSM 244 / SL1)).